Reading from the N-terminus, the 194-residue chain is Small ribosomal subunit protein uS4c (194 aa).

Residues 13 to 36 (GLTSKRPRSGSDPKNQLRSGKKSQ) are disordered. The region spanning 82 to 143 (MRLDNILFRL…KQRSKALIQN (62 aa)) is the S4 RNA-binding domain.

It belongs to the universal ribosomal protein uS4 family. Part of the 30S ribosomal subunit. Contacts protein S5. The interaction surface between S4 and S5 is involved in control of translational fidelity.

It is found in the plastid. Its subcellular location is the chloroplast. In terms of biological role, one of the primary rRNA binding proteins, it binds directly to 16S rRNA where it nucleates assembly of the body of the 30S subunit. Functionally, with S5 and S12 plays an important role in translational accuracy. The chain is Small ribosomal subunit protein uS4c (rps4) from Moraea spathulata (Large yellow moraea).